A 401-amino-acid polypeptide reads, in one-letter code: S-adenosylmethionine synthase (401 aa).

136–141 (GQGSVD) serves as a coordination point for ATP.

It belongs to the AdoMet synthase 2 family. It depends on Mg(2+) as a cofactor.

It carries out the reaction L-methionine + ATP + H2O = S-adenosyl-L-methionine + phosphate + diphosphate. It functions in the pathway amino-acid biosynthesis; S-adenosyl-L-methionine biosynthesis; S-adenosyl-L-methionine from L-methionine: step 1/1. Catalyzes the formation of S-adenosylmethionine from methionine and ATP. The polypeptide is S-adenosylmethionine synthase (Pyrococcus furiosus (strain ATCC 43587 / DSM 3638 / JCM 8422 / Vc1)).